A 264-amino-acid polypeptide reads, in one-letter code: Thiazole synthase (264 aa).

K106 serves as the catalytic Schiff-base intermediate with DXP. 1-deoxy-D-xylulose 5-phosphate contacts are provided by residues G167, 193-194, and 215-216; these read AG and NS.

The protein belongs to the ThiG family. As to quaternary structure, homotetramer. Forms heterodimers with either ThiH or ThiS.

Its subcellular location is the cytoplasm. The enzyme catalyses [ThiS sulfur-carrier protein]-C-terminal-Gly-aminoethanethioate + 2-iminoacetate + 1-deoxy-D-xylulose 5-phosphate = [ThiS sulfur-carrier protein]-C-terminal Gly-Gly + 2-[(2R,5Z)-2-carboxy-4-methylthiazol-5(2H)-ylidene]ethyl phosphate + 2 H2O + H(+). It functions in the pathway cofactor biosynthesis; thiamine diphosphate biosynthesis. Catalyzes the rearrangement of 1-deoxy-D-xylulose 5-phosphate (DXP) to produce the thiazole phosphate moiety of thiamine. Sulfur is provided by the thiocarboxylate moiety of the carrier protein ThiS. In vitro, sulfur can be provided by H(2)S. The sequence is that of Thiazole synthase from Pseudomonas fluorescens (strain Pf0-1).